The following is a 416-amino-acid chain: UDP-N-acetylglucosamine 1-carboxyvinyltransferase (416 aa).

22-23 (KN) lines the phosphoenolpyruvate pocket. Arginine 91 serves as a coordination point for UDP-N-acetyl-alpha-D-glucosamine. Cysteine 115 serves as the catalytic Proton donor. Cysteine 115 carries the 2-(S-cysteinyl)pyruvic acid O-phosphothioketal modification. Residues 120–124 (RPIDL), aspartate 305, and isoleucine 327 contribute to the UDP-N-acetyl-alpha-D-glucosamine site.

It belongs to the EPSP synthase family. MurA subfamily.

The protein localises to the cytoplasm. It catalyses the reaction phosphoenolpyruvate + UDP-N-acetyl-alpha-D-glucosamine = UDP-N-acetyl-3-O-(1-carboxyvinyl)-alpha-D-glucosamine + phosphate. It participates in cell wall biogenesis; peptidoglycan biosynthesis. Cell wall formation. Adds enolpyruvyl to UDP-N-acetylglucosamine. The protein is UDP-N-acetylglucosamine 1-carboxyvinyltransferase of Buchnera aphidicola subsp. Acyrthosiphon pisum (strain 5A).